A 445-amino-acid polypeptide reads, in one-letter code: Canavalin (445 aa).

The signal sequence occupies residues 1 to 26 (MAFSARFPLWLLLGVVLLASVSASFA). 2 consecutive Cupin type-1 domains span residues 49-207 (YLFR…DEIE) and 249-407 (FNLR…EEVE).

The protein belongs to the 7S seed storage protein family. In terms of assembly, homotrimer.

Its function is as follows. Seed storage protein. The sequence is that of Canavalin from Canavalia gladiata (Sword bean).